The primary structure comprises 140 residues: Nucleoside diphosphate kinase (140 aa).

ATP-binding residues include Lys-11, Phe-59, Arg-87, Thr-93, Arg-104, and Asn-114. Residue His-117 is the Pros-phosphohistidine intermediate of the active site.

This sequence belongs to the NDK family. As to quaternary structure, homotetramer. Mg(2+) serves as cofactor.

The protein localises to the cytoplasm. It catalyses the reaction a 2'-deoxyribonucleoside 5'-diphosphate + ATP = a 2'-deoxyribonucleoside 5'-triphosphate + ADP. It carries out the reaction a ribonucleoside 5'-diphosphate + ATP = a ribonucleoside 5'-triphosphate + ADP. Functionally, major role in the synthesis of nucleoside triphosphates other than ATP. The ATP gamma phosphate is transferred to the NDP beta phosphate via a ping-pong mechanism, using a phosphorylated active-site intermediate. The sequence is that of Nucleoside diphosphate kinase from Methylobacterium sp. (strain 4-46).